Here is a 375-residue protein sequence, read N- to C-terminus: Trichodiene synthase (375 aa).

It belongs to the trichodiene synthase family.

The enzyme catalyses (2E,6E)-farnesyl diphosphate = trichodiene + diphosphate. Its pathway is sesquiterpene biosynthesis; trichothecene biosynthesis. Its function is as follows. TS is a member of the terpene cyclase group of enzymes. It catalyzes the isomerization and cyclization of farnesyl pyro-phosphate to form trichodiene, the first cyclic intermediate in the biosynthetic pathway for trichothecenes. It serves to branch trichothecene biosynthesis from the isoprenoid pathway. This Fusarium asiaticum protein is Trichodiene synthase (TRI5).